The chain runs to 179 residues: Large ribosomal subunit protein uL6 (179 aa).

It belongs to the universal ribosomal protein uL6 family. Part of the 50S ribosomal subunit.

This protein binds to the 23S rRNA, and is important in its secondary structure. It is located near the subunit interface in the base of the L7/L12 stalk, and near the tRNA binding site of the peptidyltransferase center. This Leptospira biflexa serovar Patoc (strain Patoc 1 / ATCC 23582 / Paris) protein is Large ribosomal subunit protein uL6.